A 100-amino-acid polypeptide reads, in one-letter code: Urease subunit gamma (100 aa).

Belongs to the urease gamma subunit family. As to quaternary structure, heterotrimer of UreA (gamma), UreB (beta) and UreC (alpha) subunits. Three heterotrimers associate to form the active enzyme.

The protein resides in the cytoplasm. It carries out the reaction urea + 2 H2O + H(+) = hydrogencarbonate + 2 NH4(+). It participates in nitrogen metabolism; urea degradation; CO(2) and NH(3) from urea (urease route): step 1/1. This chain is Urease subunit gamma, found in Dinoroseobacter shibae (strain DSM 16493 / NCIMB 14021 / DFL 12).